A 636-amino-acid chain; its full sequence is Autophagy-related protein 20 (636 aa).

2 disordered regions span residues 1–68 (MQIN…QPHE) and 84–163 (NYMQ…EGKK). Polar residues predominate over residues 10 to 23 (NSVTHLENNSPSRL). The segment covering 27-49 (KTVEEHKEHEPDLQTQSEMRRES) has biased composition (basic and acidic residues). Residues 50-64 (NGSPKDTAVTNQNGD) are compositionally biased toward polar residues. The span at 122–133 (NRRKNSKERRRS) shows a compositional bias: basic residues. The region spanning 160-305 (EGKKRAQILE…DFLDPNNKNW (146 aa)) is the PX domain. 4 residues coordinate a 1,2-diacyl-sn-glycero-3-phospho-(1D-myo-inositol-3-phosphate): arginine 196, serine 198, lysine 222, and arginine 271.

The protein belongs to the sorting nexin family.

It is found in the endosome membrane. The protein resides in the preautophagosomal structure membrane. Functionally, required for cytoplasm to vacuole transport (Cvt), pexophagy and mitophagy. Also involved in endoplasmic reticulum-specific autophagic process and is essential for the survival of cells subjected to severe ER stress. Functions in protein retrieval from the endocytic pathway. This chain is Autophagy-related protein 20 (ATG20), found in Kluyveromyces lactis (strain ATCC 8585 / CBS 2359 / DSM 70799 / NBRC 1267 / NRRL Y-1140 / WM37) (Yeast).